Consider the following 175-residue polypeptide: MSSAATNHPFSVPRYPSGQTCPAASEHLLVTQGAGQEERDALAAQLGKVRITHLALPDFPSVADLQLVLSTTLKDARVGLRLDLRGDEAFVWPLHALARAAGLLADEIFMSSSPEGTRLVFCVHCATCQPATSAGHLTCTQCGVMLEVRRHFSQRLGAYLGVCADADQPYQGVQP.

In terms of assembly, the heme-dependent oxidative N-demethylase (HODM) is a heterotetramer composed of a catalytic alpha subunit, a FMN/2Fe-2S-dependent oxidoreductase beta subunit, a gamma subunit with putative aminotransferase activity, and a delta subunit of unknown function.

In terms of biological role, component of the heme-dependent oxidative N-demethylase (HODM) enzyme, that catalyzes the NADPH-dependent oxidation of dimethylamine (DMA) to methylamine (MA) and formaldehyde. Functions in bacterial methylated amine catabolism, linking alkylamine oxidation to the tetrahydrofolate C1 pool. The function of the delta subunit is unknown. The chain is Heme-dependent oxidative N-demethylase delta subunit from Ectopseudomonas mendocina (strain ymp) (Pseudomonas mendocina).